The sequence spans 149 residues: Large ribosomal subunit protein bL9 (149 aa).

Belongs to the bacterial ribosomal protein bL9 family.

Functionally, binds to the 23S rRNA. This is Large ribosomal subunit protein bL9 from Thermotoga sp. (strain RQ2).